A 199-amino-acid polypeptide reads, in one-letter code: Extracellular superoxide dismutase [Cu-Zn] (199 aa).

A signal peptide spans 1-20; it reads MMIASFAIFLSHIIFITYAT. N-linked (GlcNAc...) asparagine glycosylation is found at N33, N60, and N70. H89, H91, and H106 together coordinate Cu cation. Residues C100 and C192 are joined by a disulfide bond. Residue H106 coordinates Zn(2+). N-linked (GlcNAc...) asparagine glycosylation occurs at N111. The Zn(2+) site is built by H114, H123, and D126. H163 lines the Cu cation pocket.

It belongs to the Cu-Zn superoxide dismutase family. In terms of assembly, homodimer. Cu cation serves as cofactor. Requires Zn(2+) as cofactor.

The protein localises to the secreted. It is found in the extracellular space. The enzyme catalyses 2 superoxide + 2 H(+) = H2O2 + O2. Protect the extracellular space from toxic effect of reactive oxygen intermediates by converting superoxide radicals into hydrogen peroxide and oxygen. May act in the parasite defense by neutralizing superoxide generated by activated leukocytes, thus acting as both an antioxidant and an anti-inflammatory factor. This chain is Extracellular superoxide dismutase [Cu-Zn], found in Brugia pahangi (Filarial nematode worm).